Reading from the N-terminus, the 368-residue chain is Glutaminyl-peptide cyclotransferase (368 aa).

Residues 1 to 33 (MARERRDSKAATFFCLAWALCLALPGFPQHVSG) form the signal peptide. Asn53 carries N-linked (GlcNAc...) asparagine glycosylation. A disulfide bridge connects residues Cys143 and Cys169. Asp164 contributes to the Zn(2+) binding site. The active-site Proton acceptor is the Glu207. Position 208 (Glu208) interacts with Zn(2+). Asp254 functions as the Proton acceptor in the catalytic mechanism. An N-linked (GlcNAc...) asparagine glycan is attached at Asn292. His336 is a Zn(2+) binding site. Asn352 carries an N-linked (GlcNAc...) asparagine glycan.

The protein belongs to the glutaminyl-peptide cyclotransferase family. As to expression, expressed by the venom gland.

It is found in the secreted. The enzyme catalyses N-terminal L-glutaminyl-[peptide] = N-terminal 5-oxo-L-prolyl-[peptide] + NH4(+). Its function is as follows. Responsible for the biosynthesis of pyroglutamyl peptides. Has a bias against acidic and tryptophan residues adjacent to the N-terminal glutaminyl residue and a lack of importance of chain length after the second residue. Also catalyzes N-terminal pyroglutamate formation. The protein is Glutaminyl-peptide cyclotransferase (QPCT) of Gloydius blomhoffii (Mamushi).